Here is a 166-residue protein sequence, read N- to C-terminus: Putative 4-hydroxy-4-methyl-2-oxoglutarate aldolase (166 aa).

Residues Gly-74–Ile-77 and Arg-96 contribute to the substrate site. Asp-97 is a binding site for a divalent metal cation.

It belongs to the class II aldolase/RraA-like family. Homotrimer. A divalent metal cation is required as a cofactor.

It catalyses the reaction 4-hydroxy-4-methyl-2-oxoglutarate = 2 pyruvate. The enzyme catalyses oxaloacetate + H(+) = pyruvate + CO2. Its function is as follows. Catalyzes the aldol cleavage of 4-hydroxy-4-methyl-2-oxoglutarate (HMG) into 2 molecules of pyruvate. Also contains a secondary oxaloacetate (OAA) decarboxylase activity due to the common pyruvate enolate transition state formed following C-C bond cleavage in the retro-aldol and decarboxylation reactions. This Xanthomonas oryzae pv. oryzae (strain MAFF 311018) protein is Putative 4-hydroxy-4-methyl-2-oxoglutarate aldolase.